Here is a 384-residue protein sequence, read N- to C-terminus: Epoxyqueuosine reductase (384 aa).

Aspartate 144 serves as the catalytic Proton donor. Positions 186-218 (LPLPVDQPVEEGCGKCVACMTICPTGAIVEPYT) constitute a 4Fe-4S ferredoxin-type domain. Cysteine 198, cysteine 201, cysteine 204, cysteine 208, cysteine 224, cysteine 251, cysteine 254, and cysteine 258 together coordinate [4Fe-4S] cluster.

It belongs to the QueG family. Monomer. Cob(II)alamin is required as a cofactor. It depends on [4Fe-4S] cluster as a cofactor.

The protein localises to the cytoplasm. It carries out the reaction epoxyqueuosine(34) in tRNA + AH2 = queuosine(34) in tRNA + A + H2O. The protein operates within tRNA modification; tRNA-queuosine biosynthesis. In terms of biological role, catalyzes the conversion of epoxyqueuosine (oQ) to queuosine (Q), which is a hypermodified base found in the wobble positions of tRNA(Asp), tRNA(Asn), tRNA(His) and tRNA(Tyr). This is Epoxyqueuosine reductase from Salmonella typhimurium (strain LT2 / SGSC1412 / ATCC 700720).